Here is a 165-residue protein sequence, read N- to C-terminus: Nucleotide-binding protein P9515_05441 (165 aa).

This sequence belongs to the YajQ family.

Nucleotide-binding protein. The chain is Nucleotide-binding protein P9515_05441 from Prochlorococcus marinus (strain MIT 9515).